A 265-amino-acid chain; its full sequence is Histidine racemase (265 aa).

C67 functions as the Proton acceptor in the catalytic mechanism. The active-site Proton donor is the C209.

This sequence belongs to the histidine racemase family. As to quaternary structure, homodimer.

It catalyses the reaction L-histidine = D-histidine. Its activity is regulated as follows. Activity is not affected by buffer composition (PO(4) or Tris), ions (SO(4)(2-), Mg(2+) and EDTA) or the PLP inhibitor hydroxylamine. However, the activity is hindered by iodoacetamide and Hg(2+), which are known inhibitors of enzymes with catalytic thiols. Cofactor-independent isomerase that catalyzes the reversible conversion of L-histidine to D-histidine. Shows weak activity with L,L-lanthionine. The catalytic turnover is 10'000-fold faster with L-histidine than with L,L-lanthionine. May play a role in growth of F.nucleatum. This is Histidine racemase from Fusobacterium nucleatum subsp. nucleatum (strain ATCC 25586 / DSM 15643 / BCRC 10681 / CIP 101130 / JCM 8532 / KCTC 2640 / LMG 13131 / VPI 4355).